The following is a 513-amino-acid chain: Galactose-1-phosphate uridylyltransferase (513 aa).

Belongs to the galactose-1-phosphate uridylyltransferase type 2 family.

The protein resides in the cytoplasm. The enzyme catalyses alpha-D-galactose 1-phosphate + UDP-alpha-D-glucose = alpha-D-glucose 1-phosphate + UDP-alpha-D-galactose. Its pathway is carbohydrate metabolism; galactose metabolism. In Bacillus subtilis (strain 168), this protein is Galactose-1-phosphate uridylyltransferase (galT).